The chain runs to 243 residues: 2,3-bisphosphoglycerate-dependent phosphoglycerate mutase (243 aa).

Residues arginine 8–asparagine 15, threonine 21–glycine 22, arginine 60, glutamate 87–tyrosine 90, lysine 98, arginine 114–arginine 115, and glycine 183–asparagine 184 contribute to the substrate site. Residue histidine 9 is the Tele-phosphohistidine intermediate of the active site. Glutamate 87 functions as the Proton donor/acceptor in the catalytic mechanism.

The protein belongs to the phosphoglycerate mutase family. BPG-dependent PGAM subfamily.

It catalyses the reaction (2R)-2-phosphoglycerate = (2R)-3-phosphoglycerate. Its pathway is carbohydrate degradation; glycolysis; pyruvate from D-glyceraldehyde 3-phosphate: step 3/5. In terms of biological role, catalyzes the interconversion of 2-phosphoglycerate and 3-phosphoglycerate. The protein is 2,3-bisphosphoglycerate-dependent phosphoglycerate mutase of Clostridium acetobutylicum (strain ATCC 824 / DSM 792 / JCM 1419 / IAM 19013 / LMG 5710 / NBRC 13948 / NRRL B-527 / VKM B-1787 / 2291 / W).